The chain runs to 310 residues: Alpha/beta hydrolase domain-containing protein 17A (310 aa).

The disordered stretch occupies residues 38 to 61; the sequence is VPEPEPGPGGAGAAPSGPLRTSAA. Catalysis depends on charge relay system residues Ser190, Asp255, and His284. Position 307 is a phosphoserine (Ser307).

Belongs to the AB hydrolase superfamily. ABHD17 family. Post-translationally, palmitoylated on cysteine residues located in a cysteine cluster at the N-terminus which promotes membrane localization. Palmitoylation is required for post-synaptic localization and for depalmitoylating activity towards DLG4/PSD95. In terms of tissue distribution, expressed in brain (at protein level). Expressed in hippocampal neurons.

Its subcellular location is the cell membrane. It is found in the recycling endosome membrane. It localises to the cell projection. The protein resides in the dendritic spine. The protein localises to the postsynaptic density membrane. It carries out the reaction S-hexadecanoyl-L-cysteinyl-[protein] + H2O = L-cysteinyl-[protein] + hexadecanoate + H(+). Hydrolyzes fatty acids from S-acylated cysteine residues in proteins. Has depalmitoylating activity towards NRAS. Has depalmitoylating activity towards DLG4/PSD95. May have depalmitoylating activity towards MAP6. This is Alpha/beta hydrolase domain-containing protein 17A from Rattus norvegicus (Rat).